Here is a 110-residue protein sequence, read N- to C-terminus: Small ribosomal subunit protein bS16 (110 aa).

Positions 79–110 (AAGVKKREARNNPQKAVPRKERKAQAEAAAKG) are disordered.

It belongs to the bacterial ribosomal protein bS16 family.

This Bradyrhizobium diazoefficiens (strain JCM 10833 / BCRC 13528 / IAM 13628 / NBRC 14792 / USDA 110) protein is Small ribosomal subunit protein bS16.